Consider the following 829-residue polypeptide: Periplasmic nitrate reductase (829 aa).

The segment at residues 1–27 (MNRRDFMKANAVIAAASAAGLALPAGA) is a signal peptide (tat-type signal). The 57-residue stretch at 39–95 (LEWNKAPCRFCGTGCSVMVATREGKVVATHGDANSEVNRGLSCIKGYFLSKIMYGRD) folds into the 4Fe-4S Mo/W bis-MGD-type domain. Positions 46, 49, 53, and 81 each coordinate [4Fe-4S] cluster. Mo-bis(molybdopterin guanine dinucleotide)-binding positions include Lys83, Gln150, Asn175, Cys179, 212-219 (WGSNMAEM), 243-247 (STFEH), 262-264 (QTD), Met373, Gln377, Asn483, 509-510 (SD), Lys532, Asp559, and 719-728 (TGRVLEHWHS). Trp795 is a substrate binding site. 2 residues coordinate Mo-bis(molybdopterin guanine dinucleotide): Asn803 and Lys820.

Belongs to the prokaryotic molybdopterin-containing oxidoreductase family. NasA/NapA/NarB subfamily. Component of the periplasmic nitrate reductase NapAB complex composed of NapA and NapB. [4Fe-4S] cluster is required as a cofactor. Mo-bis(molybdopterin guanine dinucleotide) serves as cofactor. In terms of processing, predicted to be exported by the Tat system. The position of the signal peptide cleavage has not been experimentally proven.

It localises to the periplasm. The enzyme catalyses 2 Fe(II)-[cytochrome] + nitrate + 2 H(+) = 2 Fe(III)-[cytochrome] + nitrite + H2O. Functionally, catalytic subunit of the periplasmic nitrate reductase complex NapAB. Receives electrons from NapB and catalyzes the reduction of nitrate to nitrite. In Shewanella denitrificans (strain OS217 / ATCC BAA-1090 / DSM 15013), this protein is Periplasmic nitrate reductase.